A 280-amino-acid polypeptide reads, in one-letter code: Maltodextrin transport system permease protein MalD (280 aa).

Helical transmembrane passes span 15–35, 77–97, 110–130, 142–162, 200–220, and 244–264; these read LTYL…LITI, LIIA…AGYA, LVFF…AFFV, WFLI…LMKG, VQAL…SFLL, and IAYF…LFFF. In terms of domain architecture, ABC transmembrane type-1 spans 73–265; that stretch reads YLNTLIIALI…LPICILFFFL (193 aa).

It belongs to the binding-protein-dependent transport system permease family. MalFG subfamily.

It is found in the cell membrane. In terms of biological role, part of the binding-protein-dependent transport system for maltodextrin; probably responsible for the translocation of the substrate across the membrane. The polypeptide is Maltodextrin transport system permease protein MalD (malD) (Streptococcus pneumoniae (strain ATCC BAA-255 / R6)).